A 156-amino-acid polypeptide reads, in one-letter code: Endoribonuclease YbeY (156 aa).

The Zn(2+) site is built by His122, His126, and His132.

Belongs to the endoribonuclease YbeY family. The cofactor is Zn(2+).

Its subcellular location is the cytoplasm. In terms of biological role, single strand-specific metallo-endoribonuclease involved in late-stage 70S ribosome quality control and in maturation of the 3' terminus of the 16S rRNA. The polypeptide is Endoribonuclease YbeY (Bacillus cytotoxicus (strain DSM 22905 / CIP 110041 / 391-98 / NVH 391-98)).